The sequence spans 549 residues: Glucose-6-phosphate isomerase (549 aa).

Glutamate 353 serves as the catalytic Proton donor. Active-site residues include histidine 384 and lysine 513.

Belongs to the GPI family.

It localises to the cytoplasm. The catalysed reaction is alpha-D-glucose 6-phosphate = beta-D-fructose 6-phosphate. It participates in carbohydrate biosynthesis; gluconeogenesis. It functions in the pathway carbohydrate degradation; glycolysis; D-glyceraldehyde 3-phosphate and glycerone phosphate from D-glucose: step 2/4. In terms of biological role, catalyzes the reversible isomerization of glucose-6-phosphate to fructose-6-phosphate. This is Glucose-6-phosphate isomerase from Brucella anthropi (strain ATCC 49188 / DSM 6882 / CCUG 24695 / JCM 21032 / LMG 3331 / NBRC 15819 / NCTC 12168 / Alc 37) (Ochrobactrum anthropi).